The chain runs to 230 residues: UPF0500 protein C1orf216 homolog (230 aa).

The disordered stretch occupies residues 1–103; it reads MFAAIQPGLA…AEPEKLSGAS (103 aa). The span at 60 to 73 shows a compositional bias: polar residues; the sequence is RSSSESPSDNQVFQ. The segment covering 85–94 has biased composition (low complexity); it reads PPEGAEIPGA.

Belongs to the UPF0500 family.

This is UPF0500 protein C1orf216 homolog from Mus musculus (Mouse).